Reading from the N-terminus, the 445-residue chain is Argininosuccinate synthase (445 aa).

Residues 17–25 (AFSGGLDTS) and Ala43 contribute to the ATP site. Tyr99 contacts L-citrulline. The ATP site is built by Gly129 and Thr131. L-aspartate-binding residues include Thr131, Asn135, and Asp136. Residue Asn135 coordinates L-citrulline. ATP is bound at residue Asp136. Arg139 and Ser192 together coordinate L-citrulline. Asp194 is an ATP binding site. Positions 201, 203, and 280 each coordinate L-citrulline.

This sequence belongs to the argininosuccinate synthase family. Type 2 subfamily. In terms of assembly, homotetramer.

Its subcellular location is the cytoplasm. It catalyses the reaction L-citrulline + L-aspartate + ATP = 2-(N(omega)-L-arginino)succinate + AMP + diphosphate + H(+). It participates in amino-acid biosynthesis; L-arginine biosynthesis; L-arginine from L-ornithine and carbamoyl phosphate: step 2/3. The polypeptide is Argininosuccinate synthase (argG) (Bradyrhizobium diazoefficiens (strain JCM 10833 / BCRC 13528 / IAM 13628 / NBRC 14792 / USDA 110)).